The chain runs to 261 residues: MATAPTPREEFVYMAKLAEQAERYEEMVEFMEKVTAAVESEELTVEERNLLSVAYKNVIGARRASWRIISSIEQKEESRGNDEHVSVIRDYRSKIETELSNICNGILKLLDSRLIPSAALGDSKVFYLKMKGDYHRYLAEFKSGAERKDAAESTLTAYKSAQDIANTELPPTHPIRLGLALNFSVFYYEILNSPDRACGLAKQAFDEAIAELDTLGEESYKDSTLIMQLLRDNLTLWTSDMQDDGADEIKEAAPKGNDEPQ.

Belongs to the 14-3-3 family.

This is 14-3-3-like protein A from Vicia faba (Broad bean).